The primary structure comprises 374 residues: Heptahelical transmembrane protein 5 (374 aa).

At 1–79 the chain is on the cytoplasmic side; that stretch reads MGDEAEIKEH…LSIFTIHNET (79 aa). Residues 80–100 form a helical membrane-spanning segment; the sequence is LNVWTHLIGFFLFLALTIYTA. Residues 101–191 lie on the Extracellular side of the membrane; sequence TKVPSVVDLH…LIFRPITRWP (91 aa). The chain crosses the membrane as a helical span at residues 192-212; that stretch reads FYAFLGGAIFCLLASSTCHLL. The Cytoplasmic portion of the chain corresponds to 213-228; it reads SCHSERVSYIMLRLDY. A helical transmembrane segment spans residues 229–249; it reads AGIAALIATSFYPPVYYSFMC. The Extracellular segment spans residues 250 to 256; that stretch reads DPFFCNL. The helical transmembrane segment at 257 to 277 threads the bilayer; the sequence is YLGFITILGIATVLVSLLPVF. The Cytoplasmic segment spans residues 278–288; it reads QSLEFRVVRAS. Residues 289-309 form a helical membrane-spanning segment; the sequence is LFFGMGFSGLAPILHKLIIFW. Over 310–313 the chain is Extracellular; that stretch reads DQPE. Residues 314 to 334 traverse the membrane as a helical segment; that stretch reads ALHMTGYEILMGLLYGLGAVV. Residues 335-347 are Cytoplasmic-facing; the sequence is YATRIPERWMPGK. The chain crosses the membrane as a helical span at residues 348-368; the sequence is FDIAGHSHQLFHVLVVAGALT. Residues 369–374 are Extracellular-facing; that stretch reads HYRAGL.

Belongs to the ADIPOR family. In terms of tissue distribution, expressed in roots, leaves, stems and flowers.

The protein localises to the membrane. In terms of biological role, may play a role in abiotic stress response. The polypeptide is Heptahelical transmembrane protein 5 (HHP5) (Arabidopsis thaliana (Mouse-ear cress)).